The chain runs to 241 residues: Phosphoribosylaminoimidazole-succinocarboxamide synthase (241 aa).

The protein belongs to the SAICAR synthetase family.

The enzyme catalyses 5-amino-1-(5-phospho-D-ribosyl)imidazole-4-carboxylate + L-aspartate + ATP = (2S)-2-[5-amino-1-(5-phospho-beta-D-ribosyl)imidazole-4-carboxamido]succinate + ADP + phosphate + 2 H(+). It participates in purine metabolism; IMP biosynthesis via de novo pathway; 5-amino-1-(5-phospho-D-ribosyl)imidazole-4-carboxamide from 5-amino-1-(5-phospho-D-ribosyl)imidazole-4-carboxylate: step 1/2. In Caldivirga maquilingensis (strain ATCC 700844 / DSM 13496 / JCM 10307 / IC-167), this protein is Phosphoribosylaminoimidazole-succinocarboxamide synthase.